A 450-amino-acid polypeptide reads, in one-letter code: Phosphoglucosamine mutase (450 aa).

The active-site Phosphoserine intermediate is the Ser102. 4 residues coordinate Mg(2+): Ser102, Asp244, Asp246, and Asp248. Ser102 carries the post-translational modification Phosphoserine.

It belongs to the phosphohexose mutase family. The cofactor is Mg(2+). Post-translationally, activated by phosphorylation.

It catalyses the reaction alpha-D-glucosamine 1-phosphate = D-glucosamine 6-phosphate. Functionally, catalyzes the conversion of glucosamine-6-phosphate to glucosamine-1-phosphate. In Solidesulfovibrio magneticus (strain ATCC 700980 / DSM 13731 / RS-1) (Desulfovibrio magneticus), this protein is Phosphoglucosamine mutase.